The primary structure comprises 229 residues: uncharacterized protein (229 aa).

The 116-residue stretch at 102-217 (RRRTVRVEPD…REKVRRYVFE (116 aa)) folds into the PilZ domain.

It to A.aeolicus aq_820 and aq_1211.

This is an uncharacterized protein from Aquifex aeolicus (strain VF5).